We begin with the raw amino-acid sequence, 173 residues long: HTH-type transcriptional regulator IscR (173 aa).

Positions 2–131 (RLTSKGRYAV…NNITLGELMM (130 aa)) constitute an HTH rrf2-type domain. Residues 28–51 (LADISERQGISLSYLEQLFSKLRK) constitute a DNA-binding region (H-T-H motif). Positions 92, 98, and 104 each coordinate [2Fe-2S] cluster.

It depends on [2Fe-2S] cluster as a cofactor.

Functionally, regulates the transcription of several operons and genes involved in the biogenesis of Fe-S clusters and Fe-S-containing proteins. In Vibrio cholerae serotype O1 (strain ATCC 39315 / El Tor Inaba N16961), this protein is HTH-type transcriptional regulator IscR.